The following is a 306-amino-acid chain: MTASLHIILDTDPGIDDAAAIAAALFAPQLDLQLITTVAGNVSVEKTTRNALQLLHFWNSDIPLAQGAATPLLRPLRDAAYVHGESGMEGYDFVDHQRQPLAKPAFIAIRDVLMNAPEPMTLVAIGPLTNIALLLMHYPECACNIRRLVLMGGSAGRGNFTPNAEFNIAVDPEAAALVFRSGLEIVMCGLDVTNQAMLSPDFLNKLPALNRTGKMLHSLFNHYRSGSMRTGVRMHDLCAIAWLVRPELFTLQSCFVAVETQGEYTAGTTVVDIEGRLGQPANAQVALALDVDGFRQWVAEVFAYAP.

The active site involves H235.

The protein belongs to the IUNH family. RihC subfamily.

Functionally, hydrolyzes both purine and pyrimidine ribonucleosides with a broad-substrate specificity. This chain is Non-specific ribonucleoside hydrolase RihC, found in Salmonella paratyphi C (strain RKS4594).